Reading from the N-terminus, the 317-residue chain is Hairy/enhancer-of-split related with YRPW motif protein 1 (317 aa).

Residues 1–59 (MKRNHDFSSSDSELDENIEVEKESADENAGANSPLGSMSPSTTSQVQARKRRRGIIEKR) are disordered. The segment covering 30 to 47 (GANSPLGSMSPSTTSQVQ) has biased composition (polar residues). The bHLH domain maps to 48–103 (ARKRRRGIIEKRRRDRINNSLSELRRLVPSAFEKQGSAKLEKAEILQMTVDHLKML). Positions 121 to 157 (YRGLGFRECLAETARYLSIIEGLDNTDPLRIRLVSHL) constitute an Orange domain. Composition is skewed to low complexity over residues 193 to 226 (QQQQQQGAPLARSTSSPPSSNSSSPSSSSPSAPS) and 248 to 264 (PPSTSLPPGLTPPTASK). The disordered stretch occupies residues 193 to 264 (QQQQQQGAPL…PGLTPPTASK (72 aa)). Positions 307-310 (YRPW) match the YRPW motif motif.

Belongs to the HEY family.

The protein resides in the nucleus. Transcriptional repressor which functions as a downstream effector of Notch signaling. This Danio rerio (Zebrafish) protein is Hairy/enhancer-of-split related with YRPW motif protein 1 (hey1).